A 1235-amino-acid polypeptide reads, in one-letter code: Ubiquitin carboxyl-terminal hydrolase 40 (1235 aa).

In terms of domain architecture, USP spans 41-482; it reads SGIRNQGGTC…SAYMLFYRKA (442 aa). C50 functions as the Nucleophile in the catalytic mechanism. The Proton acceptor role is filled by H305.

This sequence belongs to the peptidase C19 family.

The enzyme catalyses Thiol-dependent hydrolysis of ester, thioester, amide, peptide and isopeptide bonds formed by the C-terminal Gly of ubiquitin (a 76-residue protein attached to proteins as an intracellular targeting signal).. This chain is Ubiquitin carboxyl-terminal hydrolase 40 (Usp40), found in Mus musculus (Mouse).